The primary structure comprises 240 residues: MSLVSGARDMGFDDNNNNKNNKDGDDENSSSRTRADDDALSRQMSESSLCATEEEEDDDSKLQLGPQYTIKEHLEKDKDDESLRKWKEQLLGSVDVTNIGETLDPEVRIDSLAIISPGRPDIVLLVPENGNPKGMWFTLKEGSKYNLKFTFHVNNNIVSGLRYTNTVWKTGVKVDRAKEMLGTFSPQLEPYNHVMPEETTPSGMFARGSYSARTKFLDDDNKCYLEINYSFDIRKEWPAL.

The interval 1–66 (MSLVSGARDM…DDDSKLQLGP (66 aa)) is disordered.

Belongs to the Rho GDI family. Interacts with RAC-like GTP binding proteins ARAC5/ROP4 and ARAC3/ROP6.

It is found in the cytoplasm. In terms of biological role, regulates the GDP/GTP exchange reaction of the Rho proteins by inhibiting the dissociation of GDP from them, and the subsequent binding of GTP to them. This is Rho GDP-dissociation inhibitor 1 (GDI1) from Arabidopsis thaliana (Mouse-ear cress).